The sequence spans 296 residues: Hca operon transcriptional activator HcaR (296 aa).

The HTH lysR-type domain occupies 1–58 (MELRHLRYFVAVAQALNFTRAAEKLHTSQPSLSSQIRDLENCVGVPLLVRDKRKVALT). Positions 18-38 (FTRAAEKLHTSQPSLSSQIRD) form a DNA-binding region, H-T-H motif.

It belongs to the LysR transcriptional regulatory family.

Transcriptional activator of the hca operon for 3-phenylpropionic acid catabolism. The chain is Hca operon transcriptional activator HcaR (hcaR) from Escherichia coli (strain K12).